Reading from the N-terminus, the 427-residue chain is L-rhamnose isomerase (427 aa).

The Mn(2+) site is built by H264, D296, and D298.

Belongs to the rhamnose isomerase family. Mn(2+) is required as a cofactor.

The protein resides in the cytoplasm. It catalyses the reaction L-rhamnopyranose = L-rhamnulose. It functions in the pathway carbohydrate degradation; L-rhamnose degradation; glycerone phosphate from L-rhamnose: step 1/3. Functionally, catalyzes the interconversion of L-rhamnose and L-rhamnulose. In Lactiplantibacillus plantarum (strain ATCC BAA-793 / NCIMB 8826 / WCFS1) (Lactobacillus plantarum), this protein is L-rhamnose isomerase.